The primary structure comprises 361 residues: Microtubule-associated protein Jupiter (361 aa).

Residues 1-15 (MISNYDITDSKSSSK) are compositionally biased toward polar residues. Disordered stretches follow at residues 1–38 (MISN…TPRN) and 70–99 (IGDN…TPGK). S24 carries the phosphoserine modification. T35 is modified (phosphothreonine). Positions 73–87 (NPRRGQKPVDSHSRL) are enriched in basic and acidic residues. T96 carries the phosphothreonine modification. The residue at position 105 (S105) is a Phosphoserine. Composition is skewed to low complexity over residues 125-134 (GSSTANTTNG) and 141-154 (SGSV…VSSS). Disordered regions lie at residues 125–165 (GSST…SGSR) and 328–361 (GSTN…SGLW). Phosphoserine is present on residues S143 and S154. The span at 155-165 (TENLKMNSGSR) shows a compositional bias: polar residues.

It belongs to the MAP Jupiter family.

It localises to the nucleus. Its subcellular location is the cytoplasm. It is found in the cytoskeleton. The protein resides in the spindle. In terms of biological role, binds to all microtubule populations. This chain is Microtubule-associated protein Jupiter, found in Drosophila persimilis (Fruit fly).